The chain runs to 296 residues: tRNA dimethylallyltransferase (296 aa).

Residue 2–9 (GPTASGKT) coordinates ATP. 4 to 9 (TASGKT) contacts substrate. Interaction with substrate tRNA stretches follow at residues 27 to 30 (DSAL), 151 to 155 (QRLAR), and 232 to 237 (RCVGYR).

The protein belongs to the IPP transferase family. As to quaternary structure, monomer. Requires Mg(2+) as cofactor.

It catalyses the reaction adenosine(37) in tRNA + dimethylallyl diphosphate = N(6)-dimethylallyladenosine(37) in tRNA + diphosphate. Catalyzes the transfer of a dimethylallyl group onto the adenine at position 37 in tRNAs that read codons beginning with uridine, leading to the formation of N6-(dimethylallyl)adenosine (i(6)A). In Shewanella pealeana (strain ATCC 700345 / ANG-SQ1), this protein is tRNA dimethylallyltransferase.